The sequence spans 345 residues: UPF0228 protein MA_2656 (345 aa).

It belongs to the UPF0228 family.

In Methanosarcina acetivorans (strain ATCC 35395 / DSM 2834 / JCM 12185 / C2A), this protein is UPF0228 protein MA_2656.